Consider the following 221-residue polypeptide: Woronin body major protein (221 aa).

Residues 219–221 (SRL) carry the Microbody targeting signal motif.

This sequence belongs to the eIF-5A family. Hex1 subfamily. As to quaternary structure, forms oligomers. Self-assembles into hexagonal rods.

The protein localises to the cell septum. Major component of Woronin bodies, fungal-specific organelles that occlude septal pores in order to separate intact from damaged compartments. Hex1 binds directly or indirectly to the Woronin body tether that in turn is anchored at the rim of the septal pore. In Emericella nidulans (strain FGSC A4 / ATCC 38163 / CBS 112.46 / NRRL 194 / M139) (Aspergillus nidulans), this protein is Woronin body major protein.